A 131-amino-acid polypeptide reads, in one-letter code: Serum amyloid A-3 protein (131 aa).

The signal sequence occupies residues 1-18 (MNLSTGIIFCFLILGVSS). Residues 94-105 (MTRDQVREDSKA) show a composition bias toward basic and acidic residues. Residues 94–131 (MTRDQVREDSKADQFANEWGRSGKDPNHFRPAGLPDKY) are disordered.

Belongs to the SAA family. Expressed in the liver. Expressed in mammary epithelial cells. Expressed at high levels in mammary ductal cells and vesicle engorged alveoli, but absent from stromal and connective tissue and leukocytes. Secreted into colostrum and mastitic milk (at protein level). Low expression levels, if any, in normal milk (at protein level).

It localises to the secreted. Functionally, major acute phase reactant. Apolipoprotein of the HDL complex. May have a role in protection of the mammary gland during remodeling and infection. In vitro exhibits antimicrobial activity against Escherichia coli, Streptococcus uberis and Pseudomonas aeruginosa. The polypeptide is Serum amyloid A-3 protein (SAA3) (Bos taurus (Bovine)).